Here is a 647-residue protein sequence, read N- to C-terminus: Spindle pole body-associated protein VIK1 (647 aa).

A compositionally biased stretch (polar residues) spans 36-51 (NTTNTMNGSRPSSMKS). The segment at 36 to 55 (NTTNTMNGSRPSSMKSSLAL) is disordered. A coiled-coil region spans residues 202–350 (DHEITEEISQ…SKQEKFYNDT (149 aa)).

As to quaternary structure, interacts with KAR3; the interaction is direct.

It localises to the cytoplasm. Its subcellular location is the cytoskeleton. The protein localises to the microtubule organizing center. The protein resides in the spindle pole body. It is found in the nucleus. Functionally, together with the minus end-directed microtubule motor KAR3, plays a role in microtubule organization. Recruits KAR3 to microtubules, and together they may stabilize the polymers. The KAR3-VIK1 heterodimer cross-links anti-parallel microtubules. Targets and/or maintains KAR3 at the spindle pole body during vegetative growth. In Saccharomyces cerevisiae (strain ATCC 204508 / S288c) (Baker's yeast), this protein is Spindle pole body-associated protein VIK1 (VIK1).